The following is a 372-amino-acid chain: Mitogen-activated protein kinase kinase kinase 17 (372 aa).

A Protein kinase domain is found at 3–259; it reads WTRGRILGRG…ATQLLNHPFL (257 aa). Residues 9-17 and Lys-32 contribute to the ATP site; that span reads LGRGSTATV. Asp-126 acts as the Proton acceptor in catalysis. At Ser-312 the chain carries Phosphoserine.

Belongs to the protein kinase superfamily. Ser/Thr protein kinase family. As to quaternary structure, binds to MKK3.

The protein localises to the nucleus. It carries out the reaction L-seryl-[protein] + ATP = O-phospho-L-seryl-[protein] + ADP + H(+). The enzyme catalyses L-threonyl-[protein] + ATP = O-phospho-L-threonyl-[protein] + ADP + H(+). Component of the abscisic acid (ABA) signaling pathway that may act as ABA signal transducer in the context of abiotic stresses. Triggers MPK7 activation in a MKK3-dependent manner. Mediates the ABA-dependent activation of the MKK3-MPK7 module. This Arabidopsis thaliana (Mouse-ear cress) protein is Mitogen-activated protein kinase kinase kinase 17.